Here is a 188-residue protein sequence, read N- to C-terminus: Ion-translocating oxidoreductase complex subunit B (188 aa).

The interval 1–26 (MNGVLLAIGVLLPICLASGALLGYAA) is hydrophobic. Residues 32–90 (QGDPVAERVNALLPQTQCGQCGYPGCKPYAEAIAAGDRINKCPPGGEATIQALADLLDL) form the 4Fe-4S domain. Residues Cys49, Cys52, Cys57, Cys73, Cys113, Cys116, Cys119, Cys123, Cys143, Cys146, Cys149, and Cys153 each coordinate [4Fe-4S] cluster. 4Fe-4S ferredoxin-type domains follow at residues 104–133 (RVAY…GAAR) and 134–163 (LMHT…MREI).

This sequence belongs to the 4Fe4S bacterial-type ferredoxin family. RnfB subfamily. As to quaternary structure, the complex is composed of six subunits: RnfA, RnfB, RnfC, RnfD, RnfE and RnfG. The cofactor is [4Fe-4S] cluster.

The protein localises to the cell inner membrane. In terms of biological role, part of a membrane-bound complex that couples electron transfer with translocation of ions across the membrane. The sequence is that of Ion-translocating oxidoreductase complex subunit B from Pseudomonas paraeruginosa (strain DSM 24068 / PA7) (Pseudomonas aeruginosa (strain PA7)).